Consider the following 730-residue polypeptide: Ribosomal RNA large subunit methyltransferase K/L (730 aa).

Positions 46-157 constitute a THUMP domain; that stretch reads TAYRLCVWSR…RGEAILSLDL (112 aa). The disordered stretch occupies residues 394–418; it reads GERREAQPEGTEARQQVPQASEPAR.

It belongs to the methyltransferase superfamily. RlmKL family.

The protein localises to the cytoplasm. The catalysed reaction is guanosine(2445) in 23S rRNA + S-adenosyl-L-methionine = N(2)-methylguanosine(2445) in 23S rRNA + S-adenosyl-L-homocysteine + H(+). It catalyses the reaction guanosine(2069) in 23S rRNA + S-adenosyl-L-methionine = N(2)-methylguanosine(2069) in 23S rRNA + S-adenosyl-L-homocysteine + H(+). Functionally, specifically methylates the guanine in position 2445 (m2G2445) and the guanine in position 2069 (m7G2069) of 23S rRNA. The protein is Ribosomal RNA large subunit methyltransferase K/L of Pseudomonas putida (strain ATCC 47054 / DSM 6125 / CFBP 8728 / NCIMB 11950 / KT2440).